Reading from the N-terminus, the 591-residue chain is V-type ATP synthase alpha chain (591 aa).

233 to 240 (GPFGAGKT) contacts ATP.

The protein belongs to the ATPase alpha/beta chains family.

The enzyme catalyses ATP + H2O + 4 H(+)(in) = ADP + phosphate + 5 H(+)(out). Its function is as follows. Produces ATP from ADP in the presence of a proton gradient across the membrane. The V-type alpha chain is a catalytic subunit. The protein is V-type ATP synthase alpha chain of Streptococcus pyogenes serotype M49 (strain NZ131).